The chain runs to 74 residues: Lambda-hexatoxin-Hv1d (74 aa).

A signal peptide spans 1–22 (MNTATCFIVLLVVATVIGGIEA). Positions 23-35 (GESDMRKDVMGLF) are excised as a propeptide. Intrachain disulfides connect Cys40-Cys54, Cys47-Cys59, Cys50-Cys51, and Cys53-Cys69.

Belongs to the neurotoxin 11 (kappa toxin) family. In terms of tissue distribution, expressed by the venom gland.

It is found in the secreted. Its function is as follows. This excitatory toxin inhibits insect calcium-activated potassium (KCa) channels (Slo-type). The sequence is that of Lambda-hexatoxin-Hv1d from Hadronyche versuta (Blue mountains funnel-web spider).